Here is a 317-residue protein sequence, read N- to C-terminus: Adenine deaminase (317 aa).

Positions 14, 16, and 194 each coordinate Zn(2+). Glutamate 197 (proton donor) is an active-site residue. Aspartate 275 provides a ligand contact to Zn(2+). Aspartate 276 contributes to the substrate binding site.

This sequence belongs to the metallo-dependent hydrolases superfamily. Adenosine and AMP deaminases family. Adenine deaminase type 2 subfamily. Zn(2+) serves as cofactor.

It carries out the reaction adenine + H2O + H(+) = hypoxanthine + NH4(+). Catalyzes the hydrolytic deamination of adenine to hypoxanthine. Plays an important role in the purine salvage pathway and in nitrogen catabolism. The chain is Adenine deaminase from Pseudomonas syringae pv. syringae (strain B728a).